A 238-amino-acid polypeptide reads, in one-letter code: Ribitol-5-phosphate cytidylyltransferase 2 (238 aa).

CTP-binding positions include 7 to 10 (LAGG) and 81 to 87 (GTDRNET).

This sequence belongs to the IspD/TarI cytidylyltransferase family. TarI subfamily.

The enzyme catalyses D-ribitol 5-phosphate + CTP + H(+) = CDP-L-ribitol + diphosphate. It functions in the pathway cell wall biogenesis; poly(ribitol phosphate) teichoic acid biosynthesis. Catalyzes the transfer of the cytidylyl group of CTP to D-ribitol 5-phosphate. The protein is Ribitol-5-phosphate cytidylyltransferase 2 of Staphylococcus aureus (strain bovine RF122 / ET3-1).